The following is a 146-amino-acid chain: Large ribosomal subunit protein uL11 (146 aa).

This sequence belongs to the universal ribosomal protein uL11 family. In terms of assembly, part of the ribosomal stalk of the 50S ribosomal subunit. Interacts with L10 and the large rRNA to form the base of the stalk. L10 forms an elongated spine to which L12 dimers bind in a sequential fashion forming a multimeric L10(L12)X complex. Post-translationally, one or more lysine residues are methylated.

Its function is as follows. Forms part of the ribosomal stalk which helps the ribosome interact with GTP-bound translation factors. The sequence is that of Large ribosomal subunit protein uL11 from Treponema pallidum subsp. pallidum (strain SS14).